A 901-amino-acid polypeptide reads, in one-letter code: MLIPSKLSRPVRLEHTVVRERLLAKLSGANNYRLVLITSPAGYGKTTLISQWAAGKNDLGWFSLDEGDNQQERFASYLIAAIQQATGNHCAASEAMVQKRQYASLSSLFAQLFIELADWQRPLYLVIDDYHLINNPVIHDAMRFFLRHQPENMTLVVLSRNLPQLGIANLRVRDQLLEIGSQQLAFTHQEAKQFFDCRLTSPIEADDSSRLCDDVAGWATALQLIALSARQNNSSAQHSARRLAGINASHLSDYLVDEVLDNVDARTRNFLLKSSLLRSMNDALIVRVTGEENGQMQLEEIERQGLFLQRMDDSGEWFRYHPLFGSFLRQRCQWELAVELPEIHRAAAESWMAQGFPSEAIHHALAAGDAKMLRDILLNHAWGMFNHSELGLLEQSLSALPWSNLLENPRLILLQAWLMQSQHRYSEVNTLLARAEQEMSVEMDTAMHGDFNALRAQVAINDGDQDEAERLSMVALEELPLANYYSRIVATSVHGEVLHCKGKLTKSLAVMQQTEQMARRHDVWHYALWSIIQQSEILFAQGFLQAAWESQEKAFQLVREQHLEQLPMHEFLLRIRSQLLWAWARLDEAEACARQGMDVLSTYQPQQQLQCLALMVQCSLARGDLDNARSHLNRLENLLGNGHYHSDWVSNADKVRVIYWQMTGDKTAAANWLRQTPKPEFANNHFLQSQWRNIARAQILLGDFEPAEMVLEELNENARSLRLMSDLNRNLLLLNQLYWQAGRKSEAQKALLEALTLANRTGFINHFVIEGEAMAQQLRQLIQLNTLPELEQHRAQRILRDINQHHRHKFAHFDEGFVERLLNHPEVPELIRTSPLTQREWQVLGLIYSGYSNEQIAGELDVAATTIKTHIRNLYQKLGVAHRQDAVQHAQQLLKMMGYGV.

39–46 (SPAGYGKT) provides a ligand contact to ATP. The HTH luxR-type domain maps to 829–894 (ELIRTSPLTQ…DAVQHAQQLL (66 aa)). The H-T-H motif DNA-binding region spans 853 to 872 (NEQIAGELDVAATTIKTHIR).

It belongs to the MalT family. In terms of assembly, monomer in solution. Oligomerizes to an active state in the presence of the positive effectors ATP and maltotriose.

Activated by ATP and maltotriose, which are both required for DNA binding. Positively regulates the transcription of the maltose regulon whose gene products are responsible for uptake and catabolism of malto-oligosaccharides. Specifically binds to the promoter region of its target genes, recognizing a short DNA motif called the MalT box. The chain is HTH-type transcriptional regulator MalT from Klebsiella pneumoniae (strain 342).